Consider the following 342-residue polypeptide: Organic solute transporter alpha-like protein 2 (342 aa).

Residues 1–50 (MLEISPWETLVKLLTDSLLNCTGTHEDVPHAKTFLRSLTTTYIASLAVAT) are Extracellular-facing. Asparagine 20 carries an N-linked (GlcNAc...) asparagine glycan. A helical transmembrane segment spans residues 51–71 (AVTVGTVCLAVLHLIYIHFYI). At 72–79 (THSSRRLH) the chain is on the cytoplasmic side. Residues 80-100 (IVLLACTAPLVSLLALVAMYM) traverse the membrane as a helical segment. The Extracellular portion of the chain corresponds to 101–109 (PRVWFLSHL). The chain crosses the membrane as a helical span at residues 110–130 (LSFLYFSFALWVIICLLLHIF). The Cytoplasmic segment spans residues 131-176 (DGHHALVTKMMQRLQYVEIATPPFCCLFPCLPKVRLEGKKIRWCEL). A helical transmembrane segment spans residues 177–197 (MVMQAPIVRLFATLVSLVIYF). Over 198–208 (EYQDQGLVPLK) the chain is Extracellular. Residues 209–229 (VLDFITLPSLLAGIYGTHILV) traverse the membrane as a helical segment. Residues 230–243 (TTVSRMDELISYRY) lie on the Cytoplasmic side of the membrane. Residues 244 to 264 (VVVFRLLDFFFMVFGLQQPVF) form a helical membrane-spanning segment. Residues 265–290 (DFLARYGAFGCGTVLPAIETSFYWKN) lie on the Extracellular side of the membrane. Residues 291–311 (FFTVIEAFCVTLISTVLLQPS) form a helical membrane-spanning segment. At 312 to 342 (KSSFFDKHPSCRSMSSARSTITDVDTDESTT) the chain is on the cytoplasmic side.

This sequence belongs to the OST-alpha family.

Its subcellular location is the cell membrane. Its function is as follows. Probable transporter. The sequence is that of Organic solute transporter alpha-like protein 2 (osta-2) from Caenorhabditis elegans.